The chain runs to 371 residues: Conglutinin (371 aa).

Positions 1 to 20 (MLLLPLSVLLLLTQPWRSLG) are cleaved as a signal peptide. One can recognise a Collagen-like domain in the interval 46–216 (GLPGHDGQDG…TGAKGESGLA (171 aa)). Positions 47-215 (LPGHDGQDGR…ETGAKGESGL (169 aa)) are disordered. Over residues 51-65 (DGQDGRECPHGEKGD) the composition is skewed to basic and acidic residues. At Lys63 the chain carries 5-hydroxylysine. Over residues 71–83 (PAGRAGRPGWVGP) the composition is skewed to low complexity. At Pro78 the chain carries 4-hydroxyproline. A 5-hydroxylysine modification is found at Lys87. Pro96 bears the 4-hydroxyproline mark. Lys99 is subject to 5-hydroxylysine. Residues Pro108, Pro111, Pro129, and Pro132 each carry the 4-hydroxyproline modification. Residues Lys135 and Lys141 each carry the 5-hydroxylysine modification. Over residues 139–148 (GPKGGVGAPG) the composition is skewed to gly residues. Pro147 and Pro153 each carry 4-hydroxyproline. 2 positions are modified to 5-hydroxylysine: Lys159 and Lys162. 4-hydroxyproline occurs at positions 171 and 195. A 5-hydroxylysine modification is found at Lys198. The short motif at 201-203 (RGD) is the Cell attachment site element. The 99-residue stretch at 273–371 (QLCREAKGQL…SKQLLVICEF (99 aa)) folds into the C-type lectin domain. Intrachain disulfides connect Cys275/Cys369 and Cys347/Cys361. The N-linked (GlcNAc...) asparagine glycan is linked to Asn337.

This sequence belongs to the SFTPD family. Oligomeric complex of 4 set of homotrimers. Post-translationally, the hydroxylysines may be O-glycosylated.

Calcium-dependent lectin-like protein which binds to a yeast cell wall extract and immune complexes through the complement component (C3bi). It is capable of binding non-reducing terminal N-acetylglucosamine, mannose, and fucose residues. This chain is Conglutinin (CGN1), found in Bos taurus (Bovine).